Consider the following 179-residue polypeptide: UPF0398 protein SSU05_0416 (179 aa).

This sequence belongs to the UPF0398 family.

The polypeptide is UPF0398 protein SSU05_0416 (Streptococcus suis (strain 05ZYH33)).